Reading from the N-terminus, the 492-residue chain is Probable malate:quinone oxidoreductase 1 (492 aa).

The protein belongs to the MQO family. The cofactor is FAD.

The enzyme catalyses (S)-malate + a quinone = a quinol + oxaloacetate. Its pathway is carbohydrate metabolism; tricarboxylic acid cycle; oxaloacetate from (S)-malate (quinone route): step 1/1. The sequence is that of Probable malate:quinone oxidoreductase 1 from Staphylococcus epidermidis (strain ATCC 12228 / FDA PCI 1200).